The following is a 319-amino-acid chain: Olfactory receptor 8U8 (319 aa).

The Extracellular portion of the chain corresponds to 1–28 (MAHINCTQATEFILVGLTDHQELKMPLF). Asparagine 5 carries N-linked (GlcNAc...) asparagine glycosylation. The helical transmembrane segment at 29-49 (VLFLSIYLFTVVGNLGLILLI) threads the bilayer. Topologically, residues 50-56 (RADTSLN) are cytoplasmic. Residues 57–77 (TPMYFFLSNLAFVDFCYSSVI) form a helical membrane-spanning segment. At 78–97 (TPKMLGNFLYKQNVISFDAC) the chain is on the extracellular side. Cysteines 97 and 179 form a disulfide. A helical transmembrane segment spans residues 98-118 (ATQLGCFLTFMVSESLLLASM). Over 119–122 (AYDR) the chain is Cytoplasmic. A helical membrane pass occupies residues 123–143 (YVAICNPLLYMVVMTPGICIQ). The Extracellular segment spans residues 144 to 204 (LVAVPYSYSF…KQLWILACAG (61 aa)). The chain crosses the membrane as a helical span at residues 205–225 (ITFICSVLIVFVSYMFIIFAI). Over 226 to 239 (LRMSSAEGRRKAFS) the chain is Cytoplasmic. The helical transmembrane segment at 240-260 (TCSSHMLAVTIFYGTLIFMYL) threads the bilayer. The Extracellular portion of the chain corresponds to 261–271 (QPSSSHSLDAD). The chain crosses the membrane as a helical span at residues 272–292 (KMASVFYTVIIPMLNPLIYSL). The Cytoplasmic portion of the chain corresponds to 293–319 (RNKDVKDALKKVIINRNHAFIFLKLRK).

It belongs to the G-protein coupled receptor 1 family.

The protein resides in the cell membrane. Its function is as follows. Odorant receptor. The protein is Olfactory receptor 8U8 (OR8U8) of Homo sapiens (Human).